Consider the following 325-residue polypeptide: DNA-directed RNA polymerase subunit alpha (325 aa).

Residues 1–231 (MQTSLLKPKI…DQLSVFAALE (231 aa)) form an alpha N-terminal domain (alpha-NTD) region. An alpha C-terminal domain (alpha-CTD) region spans residues 246-325 (IDPILLRPVD…ENWPPAGLDK (80 aa)).

This sequence belongs to the RNA polymerase alpha chain family. In terms of assembly, homodimer. The RNAP catalytic core consists of 2 alpha, 1 beta, 1 beta' and 1 omega subunit. When a sigma factor is associated with the core the holoenzyme is formed, which can initiate transcription.

The enzyme catalyses RNA(n) + a ribonucleoside 5'-triphosphate = RNA(n+1) + diphosphate. DNA-dependent RNA polymerase catalyzes the transcription of DNA into RNA using the four ribonucleoside triphosphates as substrates. In Paraburkholderia phytofirmans (strain DSM 17436 / LMG 22146 / PsJN) (Burkholderia phytofirmans), this protein is DNA-directed RNA polymerase subunit alpha.